Here is a 411-residue protein sequence, read N- to C-terminus: MTSATDKSIDRLVVNAKTRRRNSSVGKIDLGDTVPGFAAMPESAASKNEAKKRMKALTGDSKKDSDLLWKVWFSYREMNYRHSWLTPFFILVCVYSAYFLSGNRTESNPLHMFVAISYQVDGTDSYAKGIKDLSFVFFYMIFFTFLREFLMDVVIRPFTVYLNVTSEHRQKRMLEQMYAIFYCGVSGPFGLYIMYHSDLWLFKTKPMYRTYPVITNPFLFKIFYLGQAAFWAQQACVLVLQLEKPRKDYKELVFHHIVTLLLIWSSYVFHFTKMGLAIYITMDVSDFFLSLSKTLNYLNSVFTPFVFGLFVFFWIYLRHVVNIRILWSVLTEFRHEGNYVLNFATQQYKCWISLPIVFVLIAALQLVNLYWLFLILRILYRLIWQGIQKDERSDSDSDESAENEESKEKCE.

Residues 1-81 (MTSATDKSID…WFSYREMNYR (81 aa)) lie on the Cytoplasmic side of the membrane. A phosphoserine mark is found at Ser23 and Ser24. A helical transmembrane segment spans residues 82–102 (HSWLTPFFILVCVYSAYFLSG). A glycan (N-linked (GlcNAc...) asparagine) is linked at Asn103. Over 103-130 (NRTESNPLHMFVAISYQVDGTDSYAKGI) the chain is Lumenal. A helical transmembrane segment spans residues 131–155 (KDLSFVFFYMIFFTFLREFLMDVVI). Residues 156–172 (RPFTVYLNVTSEHRQKR) are Cytoplasmic-facing. One can recognise a TLC domain in the interval 168–385 (HRQKRMLEQM…LRILYRLIWQ (218 aa)). A helical membrane pass occupies residues 173–194 (MLEQMYAIFYCGVSGPFGLYIM). The Lumenal segment spans residues 195–217 (YHSDLWLFKTKPMYRTYPVITNP). Residues 218 to 240 (FLFKIFYLGQAAFWAQQACVLVL) form a helical membrane-spanning segment. Residues 241–249 (QLEKPRKDY) are Cytoplasmic-facing. Residues 250 to 268 (KELVFHHIVTLLLIWSSYV) traverse the membrane as a helical segment. A fumonisin B1-binding site is contributed by Leu252. Position 258 (Val258) interacts with hexacosanoate. The Lumenal segment spans residues 269–273 (FHFTK). The helical transmembrane segment at 274 to 295 (MGLAIYITMDVSDFFLSLSKTL) threads the bilayer. Residues 296-305 (NYLNSVFTPF) are Cytoplasmic-facing. Fumonisin B1 contacts are provided by Thr303, Pro304, and Arg318. A helical transmembrane segment spans residues 306-334 (VFGLFVFFWIYLRHVVNIRILWSVLTEFR). At 335–353 (HEGNYVLNFATQQYKCWIS) the chain is on the lumenal side. Hexacosanoate contacts are provided by Leu341, Cys350, and Leu364. A helical membrane pass occupies residues 354-382 (LPIVFVLIAALQLVNLYWLFLILRILYRL). Positions 378, 381, and 382 each coordinate fumonisin B1. Residues 383–411 (IWQGIQKDERSDSDSDESAENEESKEKCE) lie on the Cytoplasmic side of the membrane. Positions 390 to 411 (DERSDSDSDESAENEESKEKCE) are disordered.

Belongs to the sphingosine N-acyltransferase family. In terms of assembly, component of the ceramide synthase complex composed of at least LAC1, LAG1 and LIP1. Forms a heterotetrameric complex, where one unit of the LIP1 homodimer interacts with LAC1 and the other with either LAC1 or LAG1. In terms of processing, phosphorylated; phosphorylation is induced upon disruption of sphingolipid synthesis.

The protein localises to the endoplasmic reticulum membrane. It catalyses the reaction a very long-chain fatty acyl-CoA + a sphingoid base = an N-(very-long-chain fatty acyl)-sphingoid base + CoA + H(+). The catalysed reaction is hexacosanoyl-CoA + sphinganine = N-hexacosanoylsphinganine + CoA + H(+). The enzyme catalyses tetracosanoyl-CoA + sphinganine = N-tetracosanoylsphinganine + CoA + H(+). It carries out the reaction eicosanoyl-CoA + sphinganine = N-eicosanoylsphinganine + CoA + H(+). It catalyses the reaction a fatty acyl-CoA + sphinganine = an N-acylsphinganine + CoA + H(+). The catalysed reaction is (4R)-hydroxysphinganine + a fatty acyl-CoA = an N-acyl-(4R)-4-hydroxysphinganine + CoA + H(+). The protein operates within lipid metabolism; sphingolipid metabolism. Its activity is regulated as follows. As part of the ceramide synthase complex, inhibited by the sphinganine analog mycotoxin, fumonisin B1 (FB1). Activated by ACB1, as part of the ceramide synthase complex. Component of the ceramide synthase complex that catalyzes the transfer of the acyl chain from acyl-CoA to a sphingoid base, with high selectivity toward hexacosanoyl-CoA (C26:0-CoA). N-acylates sphinganine and phytosphingosine bases to form dihydroceramides and phytoceramides, respectively. Has a higher affinity for phytosphingosine (PHS) than dihydrosphingosine (DHS), and thus preferentially produces phytoceramides for the establishment of lateral diffusion barriers in the cortical endoplasmic reticulum and nuclear envelope. Redundant with LAC1 but requires SUR2 to compensate for sphingolipid biosynthesis. Disruption or inhibition of sphingolipid synthesis leads to the activation and phosphorylation of YPK1 through the TORC2 and PKH1 pathways, which phosphorylates ORM1 and LAG1 to activate sphingolipid synthesis. Facilitates ER-to-Golgi transport of GPI-anchored proteins. Involved in the aging process. Along with LAC1, plays a role in pheromone-induced MAP kinase-activation of mating and formation of diploid cells. May also play a role, together with LAC1, in the polarized membrane distribution of phosphatidylinositol 4,5 biphosphate required for STE5 localization to the plasma membrane. This chain is Ceramide synthase LAG1 (LAG1), found in Saccharomyces cerevisiae (strain ATCC 204508 / S288c) (Baker's yeast).